The chain runs to 239 residues: MNIDIVISADHIDEKRLINKTVIIIDILRATSVITTAINNGCKKVIPVLTVEEAKDIAKNSKEDIILGGERNALKIDGFNFSNSPLEYTKKYVEGKTVVLSTTNGTRAINNSFNAKTILISALINSKATAKAIDKLNEELIIINSGTNGQFSIDDFICSGYLIDCLYNIRKDLELSDIAKTAHYIYTNNKDIESFVKKATHYSRLKSLNLEKDLEYCFQKDIIDVVPQYKDGYIIKSNI.

Belongs to the ComB family. Requires Mg(2+) as cofactor.

It carries out the reaction (2R)-O-phospho-3-sulfolactate + H2O = (2R)-3-sulfolactate + phosphate. The protein is Probable 2-phosphosulfolactate phosphatase of Clostridium botulinum (strain Langeland / NCTC 10281 / Type F).